The sequence spans 474 residues: Glutamine synthetase (474 aa).

The region spanning 14–99 is the GS beta-grasp domain; the sequence is EKIELIDLKF…VCSIKEPRTG (86 aa). Residues 106-474 form the GS catalytic domain; it reads PRVIAQKAID…PYEFSIYYDV (369 aa). 2 residues coordinate Mg(2+): glutamate 131 and glutamate 133. Residue glutamate 211 coordinates ATP. The Mg(2+) site is built by glutamate 216 and glutamate 224. L-glutamate is bound by residues 268-269 and glycine 269; that span reads NG. Histidine 273 contacts Mg(2+). Residues 275–277 and serine 277 contribute to the ATP site; that span reads HQS. The L-glutamate site is built by arginine 325, glutamate 331, and arginine 343. The ATP site is built by arginine 343, arginine 348, and lysine 357. Glutamate 362 is a Mg(2+) binding site. Arginine 364 contributes to the L-glutamate binding site. Tyrosine 402 is subject to O-AMP-tyrosine.

It belongs to the glutamine synthetase family. Oligomer of 12 subunits arranged in the form of two hexagons. Requires Mg(2+) as cofactor.

The protein resides in the cytoplasm. The enzyme catalyses L-glutamate + NH4(+) + ATP = L-glutamine + ADP + phosphate + H(+). With respect to regulation, the activity of this enzyme could be controlled by adenylation under conditions of abundant glutamine. Functionally, involved in nitrogen metabolism via ammonium assimilation. Catalyzes the ATP-dependent biosynthesis of glutamine from glutamate and ammonia. The protein is Glutamine synthetase of Nostoc sp. (strain PCC 7120 / SAG 25.82 / UTEX 2576).